Here is a 989-residue protein sequence, read N- to C-terminus: Voltage-gated delayed rectifier potassium channel KCNH1 (989 aa).

The Cytoplasmic segment spans residues 1–220 (MTMAGGRRGL…LHYCVFKTTW (220 aa)). A PAS domain is found at 14 to 94 (QNTFLENIVR…QTFENYEMNS (81 aa)). One can recognise a PAC domain in the interval 93–145 (NSFEILMYKKNRTPVWFFVKIAPIRNEQDKVVLFLCTFSDITAFKQPIEDDSC). The interval 151–162 (FARLTRALTSSR) is required for phosphatidylinositol bisphosphate binding. Residues 221 to 241 (DWIILILTFYTAILVPYNVSF) form a helical membrane-spanning segment. The Extracellular segment spans residues 242–248 (KTRQNNV). A helical membrane pass occupies residues 249–269 (AWLVVDSIVDVIFLVDIVLNF). Residues 270–290 (HTTFVGPAGEVISDPKLIRMN) lie on the Cytoplasmic side of the membrane. Residues 291–309 (YLKTWFVIDLLSCLPYDVI) traverse the membrane as a helical segment. The Extracellular portion of the chain corresponds to 310 to 345 (NAFENVDEVSAFMGDPGKIGFADQIPPPLEGRESQG). Residues 346–368 (ISSLFSSLKVVRLLRLGRVARKL) form a helical; Voltage-sensor membrane-spanning segment. Residues 369–377 (DHYIEYGAA) lie on the Cytoplasmic side of the membrane. The chain crosses the membrane as a helical span at residues 378-399 (VLVLLVCVFGLAAHWMACIWYS). The Extracellular portion of the chain corresponds to 400–448 (IGDYEIFDEDTKTIRNNSWLYQLAMDIGTPYQFNGSGSGKWEGGPSKNS). N-linked (GlcNAc...) asparagine glycosylation is found at Asn-415 and Asn-433. Residues 449 to 470 (VYISSLYFTMTSLTSVGFGNIA) constitute an intramembrane region (pore-forming). Residues 463–468 (SVGFGN) carry the Selectivity filter motif. The Extracellular segment spans residues 471 to 477 (PSTDIEK). A helical membrane pass occupies residues 478–498 (IFAVAIMMIGSLLYATIFGNV). The Cytoplasmic portion of the chain corresponds to 499–989 (TTIFQQMYAN…ESERDIFGAS (491 aa)). The interval 673–770 (KRDALQKVLE…LDDLDVEKGN (98 aa)) is calmodulin-binding. The interval 699-701 (YNL) is interaction with cyclic nucleotide-binding pocket. Residues 855–879 (KAESMETLPERTKASGEATLKKTDS) show a composition bias toward basic and acidic residues. Disordered stretches follow at residues 855-886 (KAES…GITK) and 962-989 (RSSQ…FGAS). The CAD (involved in subunit assembly) stretch occupies residues 924–964 (ATVLEVRHELKEDIKALNAKMTNIEKQLSEILRILTSRRSS). 3 positions are modified to phosphoserine: Ser-974, Ser-978, and Ser-981. Over residues 980–989 (ESERDIFGAS) the composition is skewed to basic and acidic residues.

This sequence belongs to the potassium channel family. H (Eag) (TC 1.A.1.20) subfamily. Kv10.1/KCNH1 sub-subfamily. In terms of assembly, homomultimer. The potassium channel is composed of a homo- or heterotetrameric complex of pore-forming alpha subunits that can associate with modulating beta subunits. Heteromultimer with KCNH5/EAG2. Interacts with ALG10B. Interacts with RABEP1. Interacts (via C-terminus) with CTTN. Interacts (via C-terminal cytoplasmic region) with Ca(2+)-bound calmodulin. Interacts with the spider kappa-theraphotoxin-Aa1a and mu/kappa-theraphotoxin-Ap1a. Channel activity is regulated via tyrosine phosphorylation/dephosphorylation by SRC and PTPN6. In terms of tissue distribution, highly expressed in brain and in myoblasts at the onset of fusion, but not in other tissues. Detected in HeLa (cervical carcinoma), SH-SY5Y (neuroblastoma) and MCF-7 (epithelial tumor) cells, but not in normal epithelial cells.

The protein localises to the cell membrane. It localises to the nucleus inner membrane. It is found in the cell projection. Its subcellular location is the dendrite. The protein resides in the axon. The protein localises to the presynaptic cell membrane. It localises to the perikaryon. It is found in the postsynaptic density membrane. Its subcellular location is the early endosome membrane. The enzyme catalyses K(+)(in) = K(+)(out). With respect to regulation, channel activity is inhibited by interaction with Ca(2+)-bound calmodulin. Interaction of a single pore-forming alpha subunit with a calmodulin chain is sufficient to promote channel closure. Channel activity is not regulated by cyclic nucleotides. Channel activity is inhibited by binding intracellular phosphatidylinositol-3,5-bisphosphate and phosphatidylinositol-4,5-bisphosphate (PIP2), but is not inhibited by phosphatidylinositol 4-phosphate. Inhibited by the spider kappa-theraphotoxin-Aa1a and mu/kappa-theraphotoxin-Ap1a. Functionally, pore-forming (alpha) subunit of a voltage-gated delayed rectifier potassium channel that mediates outward-rectifying potassium currents which, on depolarization, reaches a steady-state level and do not inactivate. The activation kinetics depend on the prepulse potential and external divalent cation concentration. With negative prepulses, the current activation is delayed and slowed down several fold, whereas more positive prepulses speed up activation. The time course of activation is biphasic with a fast and a slowly activating current component. Activates at more positive membrane potentials and exhibit a steeper activation curve. Channel properties are modulated by subunit assembly. Mediates IK(NI) current in myoblasts. Involved in the regulation of cell proliferation and differentiation, in particular adipogenic and osteogenic differentiation in bone marrow-derived mesenchymal stem cells (MSCs). The polypeptide is Voltage-gated delayed rectifier potassium channel KCNH1 (Homo sapiens (Human)).